Reading from the N-terminus, the 242-residue chain is DNA repair protein RecO (242 aa).

The protein belongs to the RecO family.

Involved in DNA repair and RecF pathway recombination. The polypeptide is DNA repair protein RecO (Methylococcus capsulatus (strain ATCC 33009 / NCIMB 11132 / Bath)).